We begin with the raw amino-acid sequence, 291 residues long: Probable prolyl 4-hydroxylase 12 (291 aa).

The Cytoplasmic portion of the chain corresponds to 1 to 156 (MACLSRIFLI…GEEPSSVLHE (156 aa)). The Fe2OG dioxygenase domain occupies 125–239 (NGGSIKVRSY…LLVATKLIYA (115 aa)). Fe cation-binding residues include K142 and D144. A helical; Signal-anchor for type II membrane protein transmembrane segment spans residues 157–173 (SLLATVVLYLSNTTQGG). At 174 to 291 (ELLFPNSEMK…GTCRKSCNAC (118 aa)) the chain is on the lumenal side. N211 carries an N-linked (GlcNAc...) asparagine glycan. H220 serves as a coordination point for Fe cation. The ShKT domain occupies 251-291 (CSDEDENCGRWAKLGECKKNPVYMIGSPDYYGTCRKSCNAC). Cystine bridges form between C251–C291, C258–C284, and C267–C288.

The protein belongs to the P4HA family. Fe(2+) serves as cofactor. L-ascorbate is required as a cofactor.

The protein resides in the endoplasmic reticulum membrane. It carries out the reaction L-prolyl-[collagen] + 2-oxoglutarate + O2 = trans-4-hydroxy-L-prolyl-[collagen] + succinate + CO2. In terms of biological role, catalyzes the post-translational formation of 4-hydroxyproline in -Xaa-Pro-Gly- sequences in proline-rich peptide sequences of plant glycoproteins and other proteins. Hydroxyprolines are important constituent of many plant cell wall glycoproteins such as extensins, hydroxyproline-rich glycoproteins, lectins and arabinogalactan proteins. The chain is Probable prolyl 4-hydroxylase 12 from Arabidopsis thaliana (Mouse-ear cress).